The chain runs to 340 residues: DNA-directed RNA polymerase subunit alpha (340 aa).

Residues 1–233 (MVREEVAVST…DLFIPFLHAE (233 aa)) are alpha N-terminal domain (alpha-NTD). The segment at 266 to 340 (KKEIALKCIF…GIDLPKNKRF (75 aa)) is alpha C-terminal domain (alpha-CTD).

It belongs to the RNA polymerase alpha chain family. In terms of assembly, in plastids the minimal PEP RNA polymerase catalytic core is composed of four subunits: alpha, beta, beta', and beta''. When a (nuclear-encoded) sigma factor is associated with the core the holoenzyme is formed, which can initiate transcription.

It is found in the plastid. It localises to the chloroplast. It carries out the reaction RNA(n) + a ribonucleoside 5'-triphosphate = RNA(n+1) + diphosphate. DNA-dependent RNA polymerase catalyzes the transcription of DNA into RNA using the four ribonucleoside triphosphates as substrates. The protein is DNA-directed RNA polymerase subunit alpha of Calycanthus floridus var. glaucus (Eastern sweetshrub).